The chain runs to 76 residues: Acyl carrier protein (76 aa).

The Carrier domain occupies M1–T76. Residue S36 is modified to O-(pantetheine 4'-phosphoryl)serine.

Belongs to the acyl carrier protein (ACP) family. Post-translationally, 4'-phosphopantetheine is transferred from CoA to a specific serine of apo-ACP by AcpS. This modification is essential for activity because fatty acids are bound in thioester linkage to the sulfhydryl of the prosthetic group.

The protein resides in the cytoplasm. It participates in lipid metabolism; fatty acid biosynthesis. Carrier of the growing fatty acid chain in fatty acid biosynthesis. The polypeptide is Acyl carrier protein (Desulfatibacillum aliphaticivorans).